We begin with the raw amino-acid sequence, 125 residues long: Large ribosomal subunit protein bL12 (125 aa).

The protein belongs to the bacterial ribosomal protein bL12 family. As to quaternary structure, homodimer. Part of the ribosomal stalk of the 50S ribosomal subunit. Forms a multimeric L10(L12)X complex, where L10 forms an elongated spine to which 2 to 4 L12 dimers bind in a sequential fashion. Binds GTP-bound translation factors.

Forms part of the ribosomal stalk which helps the ribosome interact with GTP-bound translation factors. Is thus essential for accurate translation. This Parabacteroides distasonis (strain ATCC 8503 / DSM 20701 / CIP 104284 / JCM 5825 / NCTC 11152) protein is Large ribosomal subunit protein bL12.